Here is a 51-residue protein sequence, read N- to C-terminus: UPF0320 protein YOL166W-A (51 aa).

The protein belongs to the UPF0320 family.

This Saccharomyces cerevisiae (strain ATCC 204508 / S288c) (Baker's yeast) protein is UPF0320 protein YOL166W-A.